A 448-amino-acid polypeptide reads, in one-letter code: Probable glycine dehydrogenase (decarboxylating) subunit 1 (448 aa).

Belongs to the GcvP family. N-terminal subunit subfamily. As to quaternary structure, the glycine cleavage system is composed of four proteins: P, T, L and H. In this organism, the P 'protein' is a heterodimer of two subunits.

It catalyses the reaction N(6)-[(R)-lipoyl]-L-lysyl-[glycine-cleavage complex H protein] + glycine + H(+) = N(6)-[(R)-S(8)-aminomethyldihydrolipoyl]-L-lysyl-[glycine-cleavage complex H protein] + CO2. In terms of biological role, the glycine cleavage system catalyzes the degradation of glycine. The P protein binds the alpha-amino group of glycine through its pyridoxal phosphate cofactor; CO(2) is released and the remaining methylamine moiety is then transferred to the lipoamide cofactor of the H protein. The chain is Probable glycine dehydrogenase (decarboxylating) subunit 1 from Listeria monocytogenes serotype 4b (strain CLIP80459).